Here is a 562-residue protein sequence, read N- to C-terminus: Catalase T (562 aa).

Catalysis depends on residues H64 and N137. Residue Y351 coordinates heme.

The protein belongs to the catalase family. Homotetramer. Requires heme as cofactor.

It is found in the cytoplasm. It carries out the reaction 2 H2O2 = O2 + 2 H2O. In terms of biological role, occurs in almost all aerobically respiring organisms and serves to protect cells from the toxic effects of hydrogen peroxide. This chain is Catalase T (CTT1), found in Saccharomyces cerevisiae (strain ATCC 204508 / S288c) (Baker's yeast).